The sequence spans 293 residues: MSFFRVAVMLAAMTGLFLAVGYLIGGQSGMVIAFLVAGGMNLFAYWNSDKMVLRMHNAREVDERSAPDLYGIVRQLTQRGGLPMPKVYVIDTPQPNAFATGRNPQNAAVAATTGLMRALTPQELAGVMAHELAHVRHHDTLTMTLTATLAGAISMLANFAFFFGGNRDNNNPLGAVGMIVMMILAPLAAMMVQMAISRTAEYRADRGGAEICGQPLWLASALEKIERAARGIENPSAEQNPATAHLFIINPLNGHRMDNLFTTHPSTANRVAKLRALASGDLAQPRPQRGPWG.

2 helical membrane-spanning segments follow: residues 6-26 (VAVM…LIGG) and 28-48 (SGMV…YWNS). H130 contacts Zn(2+). E131 is an active-site residue. H134 is a binding site for Zn(2+). The next 2 membrane-spanning stretches (helical) occupy residues 145–165 (LTAT…FFGG) and 172–192 (PLGA…AMMV). E201 serves as a coordination point for Zn(2+).

This sequence belongs to the peptidase M48B family. Zn(2+) serves as cofactor.

It localises to the cell inner membrane. This chain is Protease HtpX homolog, found in Rhodospirillum rubrum (strain ATCC 11170 / ATH 1.1.1 / DSM 467 / LMG 4362 / NCIMB 8255 / S1).